Here is a 684-residue protein sequence, read N- to C-terminus: Threonine--tRNA ligase (684 aa).

The TGS domain occupies 1 to 66 (MTVPATDSCP…DTDAEVVPVA (66 aa)). Residues 261-567 (DHRKLGSELD…LTEHYAGAFP (307 aa)) are catalytic. 3 residues coordinate Zn(2+): cysteine 366, histidine 417, and histidine 544.

This sequence belongs to the class-II aminoacyl-tRNA synthetase family. As to quaternary structure, homodimer. Requires Zn(2+) as cofactor.

It localises to the cytoplasm. The enzyme catalyses tRNA(Thr) + L-threonine + ATP = L-threonyl-tRNA(Thr) + AMP + diphosphate + H(+). In terms of biological role, catalyzes the attachment of threonine to tRNA(Thr) in a two-step reaction: L-threonine is first activated by ATP to form Thr-AMP and then transferred to the acceptor end of tRNA(Thr). Also edits incorrectly charged L-seryl-tRNA(Thr). The chain is Threonine--tRNA ligase from Mycolicibacterium paratuberculosis (strain ATCC BAA-968 / K-10) (Mycobacterium paratuberculosis).